Consider the following 556-residue polypeptide: MSKIADDQNFNDEEENFAKLFKKELEKEETLEKGTIKEGLVVSINENDGYAMVSVGGKTEGRLALNEITDEKGQLLYQKNDPIIVHVSEKGEHPSVSYKKAISQQKIQAKIEELGENYENAIIEGKIVGKNKGGYIVESQGVEYFLSRSHSSLKNDANHIGKRVKACIIRVDKENHSINISRKRFFEVNDKRQLEVSKELLEATEPVLGVVRQITPFGIFVEAKGIEGLVHYSEISHKGPVNPEKYYKEGDEVYVKAIAYDAEKRRLSLSIKATIEDPWEEIQDKLKPGYAIKVVVSNIEHYGVFVDIGNDIEGFLHVSEISWDKNVSHPNNYLSVGQEIDVKIIDIDPKNRRLRVSLKQLTNRPFDVFESKHQVGDVLEGKVATLTDFGAFLNLGGVDGLLHNHDAFWDKDKKCKDHYKIGDVIKVKILKINKKDKKISLSAKHLVTSPTEEFAQKHKTDSVIQGKVVSIKDFGVFINADGIDVLIKNEDLNPLKKDEIKIGQEITCVVVAIEKSNNKVRASVHRLERKKEKEELQAFNTSDDKMTLGDILKEKL.

S1 motif domains follow at residues 35-105, 120-183, 204-272, 289-359, 377-444, and 461-525; these read TIKE…ISQQ, NAII…ISRK, TEPV…LSIK, GYAI…VSLK, DVLE…LSAK, and DSVI…ASVH.

The protein belongs to the bacterial ribosomal protein bS1 family.

Binds mRNA; thus facilitating recognition of the initiation point. It is needed to translate mRNA with a short Shine-Dalgarno (SD) purine-rich sequence. This Helicobacter pylori (strain ATCC 700392 / 26695) (Campylobacter pylori) protein is Small ribosomal subunit protein bS1 (rpsA).